Here is a 238-residue protein sequence, read N- to C-terminus: Ribonuclease PH (238 aa).

Residues Arg86 and 124–126 each bind phosphate; that span reads GTR.

It belongs to the RNase PH family. As to quaternary structure, homohexameric ring arranged as a trimer of dimers.

The enzyme catalyses tRNA(n+1) + phosphate = tRNA(n) + a ribonucleoside 5'-diphosphate. Its function is as follows. Phosphorolytic 3'-5' exoribonuclease that plays an important role in tRNA 3'-end maturation. Removes nucleotide residues following the 3'-CCA terminus of tRNAs; can also add nucleotides to the ends of RNA molecules by using nucleoside diphosphates as substrates, but this may not be physiologically important. Probably plays a role in initiation of 16S rRNA degradation (leading to ribosome degradation) during starvation. This is Ribonuclease PH from Nitrosospira multiformis (strain ATCC 25196 / NCIMB 11849 / C 71).